Here is a 231-residue protein sequence, read N- to C-terminus: Putative cobalt transport protein CbiM 1 (231 aa).

Transmembrane regions (helical) follow at residues 8–28 (LPLQ…AYGI), 41–61 (TLPL…LKMP), 74–94 (GLGA…IVLV), 97–117 (ALFL…SMGI), 138–158 (IVNV…ITSI), and 175–195 (FITF…IEGI).

It belongs to the CbiM family. As to quaternary structure, forms an energy-coupling factor (ECF) transporter complex composed of an ATP-binding protein (A component, CbiO), a transmembrane protein (T component, CbiQ) and 2 possible substrate-capture proteins (S components, CbiM and CbiN) of unknown stoichimetry.

It is found in the cell membrane. It participates in cofactor biosynthesis; adenosylcobalamin biosynthesis. Part of the energy-coupling factor (ECF) transporter complex CbiMNOQ involved in cobalt import. The polypeptide is Putative cobalt transport protein CbiM 1 (Methanosphaerula palustris (strain ATCC BAA-1556 / DSM 19958 / E1-9c)).